The sequence spans 107 residues: U1-lycotoxin-Ls1v (107 aa).

Residues methionine 1–serine 20 form the signal peptide. The propeptide occupies glutamate 21–arginine 41. 4 disulfide bridges follow: cysteine 44-cysteine 59, cysteine 51-cysteine 68, cysteine 58-cysteine 86, and cysteine 70-cysteine 84.

It belongs to the neurotoxin 19 (CSTX) family. 04 (U1-Lctx) subfamily. In terms of tissue distribution, expressed by the venom gland.

The protein localises to the secreted. This is U1-lycotoxin-Ls1v from Lycosa singoriensis (Wolf spider).